The chain runs to 151 residues: MKIINIKIIRNNINNFSLPQHITPGSAGLDLLACIEKPVSILPKETRLIPTGIAIYIEDIEVAGIILPRSGLGHYYGIVLGNTIGLIDSDYQGEIMISLWNRGSNKFILYPGKRIAQLLFISILRVKLSLVKSFDPFMKTIRGVKGFGHSM.

Residues 69–71 (RSG), Asn-82, 86–88 (LID), and Met-96 each bind substrate.

The protein belongs to the dUTPase family. Requires Mg(2+) as cofactor.

The enzyme catalyses dUTP + H2O = dUMP + diphosphate + H(+). It functions in the pathway pyrimidine metabolism; dUMP biosynthesis; dUMP from dCTP (dUTP route): step 2/2. This enzyme is involved in nucleotide metabolism: it produces dUMP, the immediate precursor of thymidine nucleotides and it decreases the intracellular concentration of dUTP so that uracil cannot be incorporated into DNA. The protein is Deoxyuridine 5'-triphosphate nucleotidohydrolase of Blochmanniella floridana.